The sequence spans 276 residues: Diaminopimelate epimerase (276 aa).

Substrate-binding residues include Asn13, Gln46, and Asn66. The active-site Proton donor is Cys75. Residues 76–77 (GN), Asn159, Asn192, and 210–211 (ER) contribute to the substrate site. Catalysis depends on Cys219, which acts as the Proton acceptor. 220–221 (GT) is a substrate binding site.

Belongs to the diaminopimelate epimerase family. As to quaternary structure, homodimer.

It localises to the cytoplasm. It carries out the reaction (2S,6S)-2,6-diaminopimelate = meso-2,6-diaminopimelate. It functions in the pathway amino-acid biosynthesis; L-lysine biosynthesis via DAP pathway; DL-2,6-diaminopimelate from LL-2,6-diaminopimelate: step 1/1. Functionally, catalyzes the stereoinversion of LL-2,6-diaminopimelate (L,L-DAP) to meso-diaminopimelate (meso-DAP), a precursor of L-lysine and an essential component of the bacterial peptidoglycan. In Cellvibrio japonicus (strain Ueda107) (Pseudomonas fluorescens subsp. cellulosa), this protein is Diaminopimelate epimerase.